Consider the following 562-residue polypeptide: 63 kDa globulin-like protein (562 aa).

A signal peptide spans 1–23 (MATRARATILLLLAAVLFAAAAA). Over residues 63 to 88 (QQQQERRREHGGHDDDRRDRDRRGEG) the composition is skewed to basic and acidic residues. The segment at 63–103 (QQQQERRREHGGHDDDRRDRDRRGEGSSEEEDEGRERGSRR) is disordered. Cupin type-1 domains lie at 106-264 (YVFG…EKLE) and 312-507 (FNIL…REVD). N-linked (GlcNAc...) asparagine glycosylation occurs at Asn350. Disordered regions lie at residues 383 to 430 (PHLS…QVGQ) and 516 to 550 (SAFL…GDEA). Positions 390-408 (RGGESEERRRERGKGKWRE) are enriched in basic and acidic residues. Residues 409-427 (EEEEEEEQQKGQEEEEEEQ) are compositionally biased toward acidic residues.

It belongs to the 7S seed storage protein family.

The protein resides in the secreted. Seed storage protein. In Oryza sativa subsp. japonica (Rice), this protein is 63 kDa globulin-like protein.